A 101-amino-acid chain; its full sequence is ATP synthase subunit f, mitochondrial (101 aa).

The N-terminal 6 residues, 1–6, are a transit peptide targeting the mitochondrion; the sequence is MIFKRA.

The protein belongs to the ATPase F chain family. F-type ATPases have 2 components, CF(1) - the catalytic core - and CF(0) - the membrane proton channel. In yeast, the dimeric form of ATP synthase consists of 17 polypeptides: alpha, beta, gamma, delta, epsilon, 4 (B), 5 (OSCP), 6 (A), 8, 9 (C), d, E (Tim11), f, g, h, i/j and k.

It localises to the mitochondrion. The protein localises to the mitochondrion inner membrane. Its function is as follows. Mitochondrial membrane ATP synthase (F(1)F(0) ATP synthase or Complex V) produces ATP from ADP in the presence of a proton gradient across the membrane which is generated by electron transport complexes of the respiratory chain. F-type ATPases consist of two structural domains, F(1) - containing the extramembraneous catalytic core and F(0) - containing the membrane proton channel, linked together by a central stalk and a peripheral stalk. During catalysis, ATP synthesis in the catalytic domain of F(1) is coupled via a rotary mechanism of the central stalk subunits to proton translocation. Part of the complex F(0) domain. Minor subunit located with subunit a in the membrane. The protein is ATP synthase subunit f, mitochondrial (ATP17) of Saccharomyces cerevisiae (strain ATCC 204508 / S288c) (Baker's yeast).